We begin with the raw amino-acid sequence, 402 residues long: Septin CDC11 (402 aa).

N-acetylmethionine is present on Met1. A Phosphoserine modification is found at Ser4. Residues 14–21 (RKRKTLKK) carry the Basic motif motif. Residues 21-307 (KSINFSIMII…ENYRTEALSG (287 aa)) enclose the Septin-type G domain. The segment at 31-38 (GESGSGRS) is G1 motif. 31–38 (GESGSGRS) lines the GTP pocket. The tract at residues 89 to 92 (DTPN) is G3 motif. Residues 171–174 (SKAD) form a G4 motif region. Residues 172–180 (KADSLTPKE) and Gly233 contribute to the GTP site. Residues 318–376 (AKQEISESDYLMKEEQIKLEEERLRKFEERVHQDLINKRKELLERENELKEIEKRLLAE) adopt a coiled-coil conformation. Ser394 carries the post-translational modification Phosphoserine; by CDC28. Ser395 carries the post-translational modification Phosphoserine; by GIN4.

The protein belongs to the TRAFAC class TrmE-Era-EngA-EngB-Septin-like GTPase superfamily. Septin GTPase family. In terms of assembly, component of the septin complex which consists of CDC3, CDC10, CDC11, CDC12 and probably SEP7. The purified septin complex appeared to have a stoichiometry of 2 CDC3, 1 to 2 CDC10, 1 CDC11, 2 CDC12, and 1 or none SEP7 subunit. Interacts with HSL1. Post-translationally, hyphal induction causes immediate phosphorylation at Ser-395 by GIN4 and at Ser-394 by CDC28-CCN1. GIN4 phosphorylation at Ser-395 primes CDC11 for further phosphorylation by CDC28-CCN1. CDC28-HGC1 then maintains CDC11 phosphorylation throughout hyphal growth. Ser-4 is also phosphorylated in yeast cells but not hyphal cells. Met-1 is acetylated.

The protein resides in the bud neck. In terms of biological role, septins are GTPases involved in cytokinesis that assemble early in the cell cycle as a patch at the incipient bud site and form a ring before bud emergence, which transforms into an hour-glass shaped collar of cortical filaments that spans both sides of the mother-bud neck. This collar persists until just before cytokinesis, when it splits into two rings that occupy opposite sides of the neck. The septins at the bud neck serve as a structural scaffold that recruits different components involved in diverse processes at specific stages during the cell cycle. Many proteins bind asymmetrically to the septin collar. The septin assembly is regulated by protein kinase GIN4. Septins are also involved in cell morphogenesis, chlamydospores morphogenesis, bud site selection, chitin deposition, cell cycle regulation, cell compartmentalization, and spore wall formation. CDC11 is required for the correct localization of SEC3 at bud tips and bud necks. Plays a key role in invasive growth and virulence. This is Septin CDC11 (CDC11) from Candida albicans (strain SC5314 / ATCC MYA-2876) (Yeast).